The chain runs to 281 residues: Elongation factor Ts (281 aa).

The interval 80 to 83 is involved in Mg(2+) ion dislocation from EF-Tu; sequence TDFV.

It belongs to the EF-Ts family.

It is found in the cytoplasm. In terms of biological role, associates with the EF-Tu.GDP complex and induces the exchange of GDP to GTP. It remains bound to the aminoacyl-tRNA.EF-Tu.GTP complex up to the GTP hydrolysis stage on the ribosome. This Vibrio campbellii (strain ATCC BAA-1116) protein is Elongation factor Ts.